A 395-amino-acid chain; its full sequence is Elongation factor Tu (395 aa).

The tr-type G domain occupies 10–204; it reads KPHVNIGTIG…AVDEYIPTPQ (195 aa). The interval 19-26 is G1; that stretch reads GHVDHGKT. 19 to 26 provides a ligand contact to GTP; sequence GHVDHGKT. Residue threonine 26 coordinates Mg(2+). A G2 region spans residues 60 to 64; sequence GITIS. The G3 stretch occupies residues 81–84; sequence DCPG. GTP contacts are provided by residues 81–85 and 136–139; these read DCPGH and NKCD. A G4 region spans residues 136-139; that stretch reads NKCD. The G5 stretch occupies residues 174–176; that stretch reads SAL.

The protein belongs to the TRAFAC class translation factor GTPase superfamily. Classic translation factor GTPase family. EF-Tu/EF-1A subfamily. In terms of assembly, monomer.

Its subcellular location is the cytoplasm. The enzyme catalyses GTP + H2O = GDP + phosphate + H(+). In terms of biological role, GTP hydrolase that promotes the GTP-dependent binding of aminoacyl-tRNA to the A-site of ribosomes during protein biosynthesis. The polypeptide is Elongation factor Tu (Geobacillus sp. (strain WCH70)).